The sequence spans 280 residues: Acetyl-coenzyme A carboxylase carboxyl transferase subunit beta (280 aa).

Residues 25-280 (VMRECPICHA…RLHTKENAYG (256 aa)) form the CoA carboxyltransferase N-terminal domain. Zn(2+) contacts are provided by Cys29, Cys32, Cys47, and Cys50. A C4-type zinc finger spans residues 29–50 (CPICHAKFLSMRLGRDHTCPKC).

The protein belongs to the AccD/PCCB family. As to quaternary structure, acetyl-CoA carboxylase is a heterohexamer composed of biotin carboxyl carrier protein (AccB), biotin carboxylase (AccC) and two subunits each of ACCase subunit alpha (AccA) and ACCase subunit beta (AccD). Requires Zn(2+) as cofactor.

Its subcellular location is the cytoplasm. It catalyses the reaction N(6)-carboxybiotinyl-L-lysyl-[protein] + acetyl-CoA = N(6)-biotinyl-L-lysyl-[protein] + malonyl-CoA. It participates in lipid metabolism; malonyl-CoA biosynthesis; malonyl-CoA from acetyl-CoA: step 1/1. Functionally, component of the acetyl coenzyme A carboxylase (ACC) complex. Biotin carboxylase (BC) catalyzes the carboxylation of biotin on its carrier protein (BCCP) and then the CO(2) group is transferred by the transcarboxylase to acetyl-CoA to form malonyl-CoA. This is Acetyl-coenzyme A carboxylase carboxyl transferase subunit beta from Lactobacillus helveticus (strain DPC 4571).